The primary structure comprises 334 residues: Protein-methionine-sulfoxide reductase catalytic subunit MsrP (334 aa).

The segment at residues 1–44 is a signal peptide (tat-type signal); the sequence is MKKIRPLTEADVTAESAFFMQRRQVLKALGISAAALSLPSTAQA. Residues Asn-88, 91-92, Cys-146, Thr-181, Asn-233, Arg-238, and 249-251 each bind Mo-molybdopterin; these read YE and GIK.

Belongs to the MsrP family. In terms of assembly, heterodimer of a catalytic subunit (MsrP) and a heme-binding subunit (MsrQ). Mo-molybdopterin serves as cofactor. Post-translationally, predicted to be exported by the Tat system. The position of the signal peptide cleavage has not been experimentally proven.

Its subcellular location is the periplasm. It catalyses the reaction L-methionyl-[protein] + a quinone + H2O = L-methionyl-(S)-S-oxide-[protein] + a quinol. The catalysed reaction is L-methionyl-[protein] + a quinone + H2O = L-methionyl-(R)-S-oxide-[protein] + a quinol. Part of the MsrPQ system that repairs oxidized periplasmic proteins containing methionine sulfoxide residues (Met-O), using respiratory chain electrons. Thus protects these proteins from oxidative-stress damage caused by reactive species of oxygen and chlorine generated by the host defense mechanisms. MsrPQ is essential for the maintenance of envelope integrity under bleach stress, rescuing a wide series of structurally unrelated periplasmic proteins from methionine oxidation, including the primary periplasmic chaperone SurA and the lipoprotein Pal. The catalytic subunit MsrP is non-stereospecific, being able to reduce both (R-) and (S-) diastereoisomers of methionine sulfoxide. The polypeptide is Protein-methionine-sulfoxide reductase catalytic subunit MsrP (Salmonella arizonae (strain ATCC BAA-731 / CDC346-86 / RSK2980)).